Here is a 400-residue protein sequence, read N- to C-terminus: Enoyl-[acyl-carrier-protein] reductase [NADH] (400 aa).

Residues Gly-48–Tyr-53, Phe-74–Glu-75, Asp-111–Ala-112, and Leu-139–Ala-140 each bind NAD(+). Substrate is bound at residue Tyr-225. Residue Tyr-235 is the Proton donor of the active site. NAD(+) is bound by residues Lys-244 and Val-273 to Thr-275.

It belongs to the TER reductase family. As to quaternary structure, monomer.

It catalyses the reaction a 2,3-saturated acyl-[ACP] + NAD(+) = a (2E)-enoyl-[ACP] + NADH + H(+). It participates in lipid metabolism; fatty acid biosynthesis. In terms of biological role, involved in the final reduction of the elongation cycle of fatty acid synthesis (FAS II). Catalyzes the reduction of a carbon-carbon double bond in an enoyl moiety that is covalently linked to an acyl carrier protein (ACP). This is Enoyl-[acyl-carrier-protein] reductase [NADH] from Burkholderia ambifaria (strain MC40-6).